Consider the following 335-residue polypeptide: D-arabinose 1-dehydrogenase (335 aa).

The active-site Proton donor is Y58. H124 is a substrate binding site. An NAD(+)-binding site is contributed by 221–287 (SLLRSQETRQ…VSSMEELKLA (67 aa)).

The protein belongs to the aldo/keto reductase family. Aldo/keto reductase 2 subfamily.

The enzyme catalyses D-arabinose + NAD(+) = D-arabinono-1,4-lactone + NADH + H(+). In Saccharomyces cerevisiae (strain ATCC 204508 / S288c) (Baker's yeast), this protein is D-arabinose 1-dehydrogenase (ARA2).